Here is a 120-residue protein sequence, read N- to C-terminus: MSNKNEALLRRKARVRRALKATANGRPRLSVFRSSKQIYVQVIDDAVGRTLAAASSLDKDLKASLKTGADKAAAEAVGKLVAERAKAAGVTKVVFDRSGYIFHGRVKALADAAREGGLDF.

The protein belongs to the universal ribosomal protein uL18 family. Part of the 50S ribosomal subunit; part of the 5S rRNA/L5/L18/L25 subcomplex. Contacts the 5S and 23S rRNAs.

Functionally, this is one of the proteins that bind and probably mediate the attachment of the 5S RNA into the large ribosomal subunit, where it forms part of the central protuberance. The protein is Large ribosomal subunit protein uL18 of Methylorubrum populi (strain ATCC BAA-705 / NCIMB 13946 / BJ001) (Methylobacterium populi).